We begin with the raw amino-acid sequence, 154 residues long: Snaclec EMS16 subunit beta (154 aa).

An N-terminal signal peptide occupies residues 1–26 (MGRLISVRFSLLVVFLSLSGIGAGLC). Cysteine 27 and cysteine 38 are joined by a disulfide. Residues 34–147 (FDQHCYKVFE…CEKSVSFVCK (114 aa)) form the C-type lectin domain. Residue asparagine 47 is glycosylated (N-linked (GlcNAc...) asparagine). Disulfide bonds link cysteine 55-cysteine 146 and cysteine 121-cysteine 138.

Belongs to the snaclec family. Heterodimer of subunits A and B; disulfide-linked. Expressed by the venom gland.

It is found in the secreted. In terms of biological role, EMS16 is a potent and selective inhibitor of alpha-2/beta-1 (ITGA2/ITGB1) integrin and acts as a potent antagonist of platelet aggregation and cell migration. Binds specifically to the I domain of the alpha-2 subunit, in a metal ion-independent fashion. In Echis multisquamatus (Central Asian sand viper), this protein is Snaclec EMS16 subunit beta.